The primary structure comprises 420 residues: MLKFIDLFAGIGGMRLGFEQAMHELGIETACVLSSEIDKHAQTTYAMNFHEQSQGDITQIQDFPSFDFLLAGFPCQPFSYAGKQKGFGDTRGTLFFEIERILKAYRPKGFLLENVRGLTTHDKGRTFKTILQKLHELNYGVYLILNSSNFQVPQNRLRVYIVGLDQSQPELTITSHIGATDSHKFKQLSNQASLFDTNKIMLVRDILEDHPLDKYNCSTDFVNKLLAFIGHPIKLNGKRLIDYRNGNSIHSWELGIKGECTSDEIQFMNALIANRRKKHFGAHQDGKKLTIEQIKTFFEHDDLDSIMQSLITKGYLQEVNGRFNPVAGNMSFEVFKFLDPDSVSITLVSSDAHKIGVVHQNRIRRITPRECARLQGFPDSFQFHPKDSLAYRQFGNSVSVPVVKAVILDLFKSADLASCF.

Residues 2–417 (LKFIDLFAGI…LDLFKSADLA (416 aa)) form the SAM-dependent MTase C5-type domain. Cysteine 75 is a catalytic residue.

Belongs to the class I-like SAM-binding methyltransferase superfamily. C5-methyltransferase family.

It carries out the reaction a 2'-deoxycytidine in DNA + S-adenosyl-L-methionine = a 5-methyl-2'-deoxycytidine in DNA + S-adenosyl-L-homocysteine + H(+). Its function is as follows. A methylase that recognizes the double-stranded sequence 5'-GGYRCC-3', methylates C-5 on both strands, and protects the DNA from cleavage by the HgiCI endonuclease. This Herpetosiphon aurantiacus (Herpetosiphon giganteus) protein is Type II methyltransferase M.HgiCI (hgiCIM).